The chain runs to 171 residues: Odorant-binding protein 1b (171 aa).

The N-terminal stretch at 1 to 19 is a signal peptide; that stretch reads MMVKFLLLALVFGLAHVHA. Cystine bridges form between Cys57-Cys61 and Cys76-Cys169.

Belongs to the calycin superfamily. Lipocalin family. In terms of assembly, may form a heterodimer with OBP1A. In terms of processing, the N-terminus may be blocked. Expressed in nasal mucosa (at protein level). Specifically detected in septal and lateral nasal glands.

It localises to the secreted. Functionally, binds the chemical odorant 2-isobutyl-3-methoxypyrazine. The sequence is that of Odorant-binding protein 1b from Mus musculus (Mouse).